The following is a 345-amino-acid chain: NADH-ubiquinone oxidoreductase chain 2 (345 aa).

10 helical membrane passes run 1-21, 26-46, 60-80, 96-115, 122-144, 148-170, 201-223, 242-262, 274-294, and 323-343; these read MNPL…ILTT, WVSA…IISM, FLIQ…NAHL, IALT…HFWL, VPIL…LLIM, LIPT…LGGL, TLLN…HLTM, SLFL…GFIP, NLTP…MFYL, and TSTL…TPTL.

Belongs to the complex I subunit 2 family.

The protein resides in the mitochondrion inner membrane. The enzyme catalyses a ubiquinone + NADH + 5 H(+)(in) = a ubiquinol + NAD(+) + 4 H(+)(out). Its function is as follows. Core subunit of the mitochondrial membrane respiratory chain NADH dehydrogenase (Complex I) that is believed to belong to the minimal assembly required for catalysis. Complex I functions in the transfer of electrons from NADH to the respiratory chain. The immediate electron acceptor for the enzyme is believed to be ubiquinone. In Varanus nebulosus (Clouded monitor), this protein is NADH-ubiquinone oxidoreductase chain 2 (MT-ND2).